A 227-amino-acid polypeptide reads, in one-letter code: Ribose-5-phosphate isomerase A (227 aa).

Substrate-binding positions include 26–29, 82–85, and 95–98; these read TGST, DGAD, and KGGG. Glu104 functions as the Proton acceptor in the catalytic mechanism. Residue Lys122 coordinates substrate.

Belongs to the ribose 5-phosphate isomerase family. In terms of assembly, homodimer.

The catalysed reaction is aldehydo-D-ribose 5-phosphate = D-ribulose 5-phosphate. It participates in carbohydrate degradation; pentose phosphate pathway; D-ribose 5-phosphate from D-ribulose 5-phosphate (non-oxidative stage): step 1/1. Functionally, catalyzes the reversible conversion of ribose-5-phosphate to ribulose 5-phosphate. This is Ribose-5-phosphate isomerase A from Streptococcus equi subsp. zooepidemicus (strain H70).